A 364-amino-acid polypeptide reads, in one-letter code: Aminomethyltransferase (364 aa).

It belongs to the GcvT family. In terms of assembly, the glycine cleavage system is composed of four proteins: P, T, L and H.

The enzyme catalyses N(6)-[(R)-S(8)-aminomethyldihydrolipoyl]-L-lysyl-[protein] + (6S)-5,6,7,8-tetrahydrofolate = N(6)-[(R)-dihydrolipoyl]-L-lysyl-[protein] + (6R)-5,10-methylene-5,6,7,8-tetrahydrofolate + NH4(+). In terms of biological role, the glycine cleavage system catalyzes the degradation of glycine. This chain is Aminomethyltransferase, found in Salmonella arizonae (strain ATCC BAA-731 / CDC346-86 / RSK2980).